A 126-amino-acid chain; its full sequence is Chorion class B protein M1768 (126 aa).

The left arm stretch occupies residues 1–17 (YGGLGYGGLGGGCGRGF). Residues 18–86 (SGGGLPVATA…GNGAVGITRE (69 aa)) form a central domain region. The segment at 87–126 (GGFGYGAGYGDGYGLGFGGYGGGYGLGYGGYGGCGCSWGY) is right arm (Gly-rich tandem repeats).

It belongs to the chorion protein family.

This protein is one of many from the eggshell of the silk moth. The protein is Chorion class B protein M1768 of Bombyx mori (Silk moth).